The chain runs to 254 residues: 3-oxo-5-alpha-steroid 4-dehydrogenase 2 (254 aa).

The next 4 membrane-spanning stretches (helical) occupy residues 8–28, 72–92, 146–166, and 206–226; these read SPVLAGSATLVALGALALYVA, PLSLFGPPGTVLLGLFCLHYF, FSLGVFLFILGMGINIHSDYI, and LATWSLPALAFAFFSLCFLGL.

The protein belongs to the steroid 5-alpha reductase family. As to expression, expressed in high levels in the prostate and many other androgen-sensitive tissues.

Its subcellular location is the microsome membrane. The protein localises to the endoplasmic reticulum membrane. The enzyme catalyses a 3-oxo-5alpha-steroid + NADP(+) = a 3-oxo-Delta(4)-steroid + NADPH + H(+). It carries out the reaction 17beta-hydroxy-5alpha-androstan-3-one + NADP(+) = testosterone + NADPH + H(+). It catalyses the reaction 5alpha-pregnane-3,20-dione + NADP(+) = progesterone + NADPH + H(+). In terms of biological role, converts testosterone (T) into 5-alpha-dihydrotestosterone (DHT) and progesterone or corticosterone into their corresponding 5-alpha-3-oxosteroids. It plays a central role in sexual differentiation and androgen physiology. In Homo sapiens (Human), this protein is 3-oxo-5-alpha-steroid 4-dehydrogenase 2 (SRD5A2).